The primary structure comprises 302 residues: Beta-lactamase (302 aa).

Over residues 1 to 11 the composition is skewed to basic residues; sequence MADRRRVHAWA. The first 29 residues, 1–29, serve as a signal peptide directing secretion; that stretch reads MADRRRVHAWARARPAAPEPAPPTPSAAA. Residues 1-43 are disordered; the sequence is MADRRRVHAWARARPAAPEPAPPTPSAAAPSVAPGPAATPPDP. Residues 26-36 are compositionally biased toward low complexity; sequence SAAAPSVAPGP. The active-site Acyl-ester intermediate is serine 85. Position 143 (serine 143) interacts with substrate. The active-site Proton acceptor is the glutamate 179. 247 to 249 contacts substrate; it reads KTG.

It belongs to the class-A beta-lactamase family.

The protein resides in the secreted. It catalyses the reaction a beta-lactam + H2O = a substituted beta-amino acid. Functionally, active on penicillins but not on cephalosporins. In Amycolatopsis lactamdurans (Nocardia lactamdurans), this protein is Beta-lactamase (bla).